The sequence spans 121 residues: NAD(P)H-quinone oxidoreductase subunit M (121 aa).

The protein belongs to the complex I NdhM subunit family. NDH-1 can be composed of about 15 different subunits; different subcomplexes with different compositions have been identified which probably have different functions.

It is found in the cellular thylakoid membrane. It carries out the reaction a plastoquinone + NADH + (n+1) H(+)(in) = a plastoquinol + NAD(+) + n H(+)(out). The catalysed reaction is a plastoquinone + NADPH + (n+1) H(+)(in) = a plastoquinol + NADP(+) + n H(+)(out). In terms of biological role, NDH-1 shuttles electrons from an unknown electron donor, via FMN and iron-sulfur (Fe-S) centers, to quinones in the respiratory and/or the photosynthetic chain. The immediate electron acceptor for the enzyme in this species is believed to be plastoquinone. Couples the redox reaction to proton translocation, and thus conserves the redox energy in a proton gradient. Cyanobacterial NDH-1 also plays a role in inorganic carbon-concentration. This chain is NAD(P)H-quinone oxidoreductase subunit M, found in Synechococcus sp. (strain JA-2-3B'a(2-13)) (Cyanobacteria bacterium Yellowstone B-Prime).